A 109-amino-acid chain; its full sequence is Heterogeneous nuclear ribonucleoprotein-like protein HD40 (109 aa).

The tract at residues 1-36 (EEVSNGQEHTEGMXQGEXNXIXVEEHHEGEKNSHLV) is disordered. The segment covering 23 to 36 (VEEHHEGEKNSHLV) has biased composition (basic and acidic residues). In terms of domain architecture, RRM spans 40–50 (EEKKLFVGALS). Residues Arg102 and Arg105 each carry the asymmetric dimethylarginine modification.

It is found in the cytoplasm. Its subcellular location is the nucleus. The chain is Heterogeneous nuclear ribonucleoprotein-like protein HD40 from Artemia salina (Brine shrimp).